A 97-amino-acid chain; its full sequence is Small ribosomal subunit protein eS25 (97 aa).

The disordered stretch occupies residues 1–24 (MAPAASGAKKQKKKWSKGKVKDKA). Positions 9–18 (KKQKKKWSKG) are enriched in basic residues.

Belongs to the eukaryotic ribosomal protein eS25 family. Component of the small ribosomal subunit (SSU). Mature N.crassa ribosomes consist of a small (40S) and a large (60S) subunit. The 40S small subunit contains 1 molecule of ribosomal RNA (18S rRNA) and at least 32 different proteins. The large 60S subunit contains 3 rRNA molecules (26S, 5.8S and 5S rRNA) and at least 42 different proteins.

Its subcellular location is the cytoplasm. Component of the ribosome, a large ribonucleoprotein complex responsible for the synthesis of proteins in the cell. The small ribosomal subunit (SSU) binds messenger RNAs (mRNAs) and translates the encoded message by selecting cognate aminoacyl-transfer RNA (tRNA) molecules. The large subunit (LSU) contains the ribosomal catalytic site termed the peptidyl transferase center (PTC), which catalyzes the formation of peptide bonds, thereby polymerizing the amino acids delivered by tRNAs into a polypeptide chain. The nascent polypeptides leave the ribosome through a tunnel in the LSU and interact with protein factors that function in enzymatic processing, targeting, and the membrane insertion of nascent chains at the exit of the ribosomal tunnel. The polypeptide is Small ribosomal subunit protein eS25 (rps-25) (Neurospora crassa (strain ATCC 24698 / 74-OR23-1A / CBS 708.71 / DSM 1257 / FGSC 987)).